The sequence spans 728 residues: 1,4-alpha-glucan branching enzyme GlgB (728 aa).

Catalysis depends on D405, which acts as the Nucleophile. The Proton donor role is filled by E458.

Belongs to the glycosyl hydrolase 13 family. GlgB subfamily. Monomer.

The enzyme catalyses Transfers a segment of a (1-&gt;4)-alpha-D-glucan chain to a primary hydroxy group in a similar glucan chain.. Its pathway is glycan biosynthesis; glycogen biosynthesis. Its function is as follows. Catalyzes the formation of the alpha-1,6-glucosidic linkages in glycogen by scission of a 1,4-alpha-linked oligosaccharide from growing alpha-1,4-glucan chains and the subsequent attachment of the oligosaccharide to the alpha-1,6 position. The chain is 1,4-alpha-glucan branching enzyme GlgB from Salmonella paratyphi A (strain ATCC 9150 / SARB42).